Consider the following 265-residue polypeptide: Hydroxyethylthiazole kinase (265 aa).

Residue methionine 50 coordinates substrate. Residues arginine 125 and threonine 171 each coordinate ATP. Glycine 198 lines the substrate pocket.

This sequence belongs to the Thz kinase family. It depends on Mg(2+) as a cofactor.

The enzyme catalyses 5-(2-hydroxyethyl)-4-methylthiazole + ATP = 4-methyl-5-(2-phosphooxyethyl)-thiazole + ADP + H(+). It participates in cofactor biosynthesis; thiamine diphosphate biosynthesis; 4-methyl-5-(2-phosphoethyl)-thiazole from 5-(2-hydroxyethyl)-4-methylthiazole: step 1/1. In terms of biological role, catalyzes the phosphorylation of the hydroxyl group of 4-methyl-5-beta-hydroxyethylthiazole (THZ). In Salmonella agona (strain SL483), this protein is Hydroxyethylthiazole kinase.